A 208-amino-acid chain; its full sequence is Imidazole glycerol phosphate synthase subunit HisH (208 aa).

A Glutamine amidotransferase type-1 domain is found at 1 to 206 (MIVIIDYDTG…KEVIRSCKSS (206 aa)). Catalysis depends on C79, which acts as the Nucleophile. Residues H181 and E183 contribute to the active site.

In terms of assembly, heterodimer of HisH and HisF.

The protein resides in the cytoplasm. The enzyme catalyses 5-[(5-phospho-1-deoxy-D-ribulos-1-ylimino)methylamino]-1-(5-phospho-beta-D-ribosyl)imidazole-4-carboxamide + L-glutamine = D-erythro-1-(imidazol-4-yl)glycerol 3-phosphate + 5-amino-1-(5-phospho-beta-D-ribosyl)imidazole-4-carboxamide + L-glutamate + H(+). It carries out the reaction L-glutamine + H2O = L-glutamate + NH4(+). The protein operates within amino-acid biosynthesis; L-histidine biosynthesis; L-histidine from 5-phospho-alpha-D-ribose 1-diphosphate: step 5/9. IGPS catalyzes the conversion of PRFAR and glutamine to IGP, AICAR and glutamate. The HisH subunit catalyzes the hydrolysis of glutamine to glutamate and ammonia as part of the synthesis of IGP and AICAR. The resulting ammonia molecule is channeled to the active site of HisF. The sequence is that of Imidazole glycerol phosphate synthase subunit HisH from Listeria monocytogenes serotype 4b (strain CLIP80459).